The chain runs to 204 residues: Ras-related protein RABG1 (204 aa).

12 to 19 (GDSGVGKT) contributes to the GTP binding site. The short motif at 34 to 42 (HNSTIYVDL) is the Effector region element. Residues 60-64 (DTAGQ), 122-125 (NKTD), and 155-156 (SA) each bind GTP. S-geranylgeranyl cysteine attachment occurs at residues C202 and C204. The residue at position 204 (C204) is a Cysteine methyl ester.

The protein belongs to the small GTPase superfamily. Rab family.

It localises to the cell membrane. In terms of biological role, intracellular vesicle trafficking and protein transport. This chain is Ras-related protein RABG1 (RABG1), found in Arabidopsis thaliana (Mouse-ear cress).